Here is a 387-residue protein sequence, read N- to C-terminus: Putative acid--amine ligase YjfC (387 aa).

101 to 103 is a binding site for ATP; the sequence is RMD. Residues Asp-103, Glu-116, and Asn-118 each coordinate Mg(2+). Residues Lys-265, Lys-302, Gly-309, Gln-337, and 372 to 374 each bind ATP; that span reads LIT.

Belongs to the glutathionylspermidine synthase preATP-grasp family.

Its function is as follows. May be a ligase forming an amide bond. Shows ATPase activity. Despite its similarity to the C-terminal synthetase domain of Gss, is not a glutathionylspermidine (Gsp) synthetase. Cannot synthesize Gsp, glutathione (GSH), or GSH intermediates, from GSH and spermidine, cysteine and glutamate, gamma-glutamylcysteine and spermidine, and gamma-glutamylcysteine and glycine. Does not bind to Gsp. The protein is Putative acid--amine ligase YjfC (yjfC) of Escherichia coli (strain K12).